A 166-amino-acid polypeptide reads, in one-letter code: 3-hydroxyacyl-[acyl-carrier-protein] dehydratase, mitochondrial (166 aa).

Residues 1–17 (MLAKTVFPRGLLVLRSF) constitute a mitochondrion transit peptide. Residues 34–125 (ETRVFSSEDI…VQAIALRETK (92 aa)) enclose the MaoC-like domain.

In terms of assembly, homodimer. In terms of tissue distribution, expressed in leaves, roots, siliques and flowers.

It is found in the mitochondrion. It carries out the reaction a (3R)-hydroxyacyl-[ACP] = a (2E)-enoyl-[ACP] + H2O. It catalyses the reaction (3R)-hydroxyhexadecanoyl-[ACP] = (2E)-hexadecenoyl-[ACP] + H2O. The enzyme catalyses (3R)-hydroxydecanoyl-[ACP] = (2E)-decenoyl-[ACP] + H2O. The protein operates within lipid metabolism; fatty acid biosynthesis. 3-hydroxyl-[acyl-carrier-protein] (3-hydroxyl-ACP) dehydratase required for mitochondrial fatty acid synthesis (mtFAS). MtFAS are essential for photorespiration and plant development, probably by influencing mitochondrial membrane lipid composition and other lipid metabolic pathways. The polypeptide is 3-hydroxyacyl-[acyl-carrier-protein] dehydratase, mitochondrial (Arabidopsis thaliana (Mouse-ear cress)).